The primary structure comprises 232 residues: Megakaryocyte and platelet inhibitory receptor G6b (232 aa).

Positions 1–17 (MALVLQLLPLLLSKVQG) are cleaved as a signal peptide. Residues 18 to 140 (NPEVSLEGNP…GSTHGSEYSK (123 aa)) lie on the Extracellular side of the membrane. N-linked (GlcNAc...) asparagine glycosylation is found at asparagine 32 and asparagine 112. A helical transmembrane segment spans residues 141–161 (VLIPLLGFGLVLGLGALGLVW). Over 162–232 (WRRSCVPPSH…DASTVYAVVV (71 aa)) the chain is Cytoplasmic. Short sequence motifs (ITIM motif) lie at residues 200–205 (LHYADL) and 226–231 (TVYAVV). Tyrosine 202 is modified (phosphotyrosine).

Interacts (via ITIM motif) with PTPN6 and PTPN11. Binds to heparin. N-glycosylated. Post-translationally, may be O-glycosylated. In terms of processing, phosphorylated.

The protein resides in the cell membrane. Inhibitory receptor that acts as a critical regulator of hematopoietic lineage differentiation, megakaryocyte function and platelet production. Inhibits platelet aggregation and activation by agonists such as ADP and collagen-related peptide. This regulation of megakaryocate function as well as platelet production ann activation is done through the inhibition (via the 2 ITIM motifs) of the receptors CLEC1B and GP6:FcRgamma signaling. Appears to operate in a calcium-independent manner. The polypeptide is Megakaryocyte and platelet inhibitory receptor G6b (Rattus norvegicus (Rat)).